A 107-amino-acid chain; its full sequence is MNTLELSARVLECGAMRHTPAGLPALELLLVHESEVVEAGHPRRVELTISAVALGDLALLLADTPLGTEMQVQGFLAPARKDSVKVKLHLQQARRIAGSMGRDPLVG.

An SSB domain is found at methionine 1 to alanine 97.

It belongs to the PriB family. As to quaternary structure, homodimer. Interacts with PriA and DnaT. Component of the replication restart primosome. Primosome assembly occurs via a 'hand-off' mechanism. PriA binds to replication forks, subsequently PriB then DnaT bind; DnaT then displaces ssDNA to generate the helicase loading substrate.

Involved in the restart of stalled replication forks, which reloads the replicative helicase on sites other than the origin of replication; the PriA-PriB pathway is the major replication restart pathway. During primosome assembly it facilitates complex formation between PriA and DnaT on DNA; stabilizes PriA on DNA. Stimulates the DNA unwinding activity of PriA helicase. This Bordetella parapertussis (strain 12822 / ATCC BAA-587 / NCTC 13253) protein is Replication restart protein PriB.